A 380-amino-acid chain; its full sequence is Queuine tRNA-ribosyltransferase (380 aa).

Aspartate 96 functions as the Proton acceptor in the catalytic mechanism. Substrate-binding positions include 96 to 100 (DSGGF), aspartate 150, glutamine 193, and glycine 220. The segment at 251–257 (GVGAPDS) is RNA binding. Aspartate 270 acts as the Nucleophile in catalysis. The RNA binding; important for wobble base 34 recognition stretch occupies residues 275-279 (TRIAR). Zn(2+)-binding residues include cysteine 308, cysteine 310, cysteine 313, and histidine 339.

Belongs to the queuine tRNA-ribosyltransferase family. As to quaternary structure, homodimer. Within each dimer, one monomer is responsible for RNA recognition and catalysis, while the other monomer binds to the replacement base PreQ1. The cofactor is Zn(2+).

The catalysed reaction is 7-aminomethyl-7-carbaguanine + guanosine(34) in tRNA = 7-aminomethyl-7-carbaguanosine(34) in tRNA + guanine. The protein operates within tRNA modification; tRNA-queuosine biosynthesis. Its function is as follows. Catalyzes the base-exchange of a guanine (G) residue with the queuine precursor 7-aminomethyl-7-deazaguanine (PreQ1) at position 34 (anticodon wobble position) in tRNAs with GU(N) anticodons (tRNA-Asp, -Asn, -His and -Tyr). Catalysis occurs through a double-displacement mechanism. The nucleophile active site attacks the C1' of nucleotide 34 to detach the guanine base from the RNA, forming a covalent enzyme-RNA intermediate. The proton acceptor active site deprotonates the incoming PreQ1, allowing a nucleophilic attack on the C1' of the ribose to form the product. After dissociation, two additional enzymatic reactions on the tRNA convert PreQ1 to queuine (Q), resulting in the hypermodified nucleoside queuosine (7-(((4,5-cis-dihydroxy-2-cyclopenten-1-yl)amino)methyl)-7-deazaguanosine). The polypeptide is Queuine tRNA-ribosyltransferase (Streptococcus equi subsp. equi (strain 4047)).